We begin with the raw amino-acid sequence, 194 residues long: Molybdenum cofactor guanylyltransferase (194 aa).

Residues 12 to 14, Lys-25, Asn-53, Asp-71, and Asp-101 each bind GTP; that span reads LAG. Asp-101 is a Mg(2+) binding site.

Belongs to the MobA family. In terms of assembly, monomer. Mg(2+) serves as cofactor.

Its subcellular location is the cytoplasm. The enzyme catalyses Mo-molybdopterin + GTP + H(+) = Mo-molybdopterin guanine dinucleotide + diphosphate. Transfers a GMP moiety from GTP to Mo-molybdopterin (Mo-MPT) cofactor (Moco or molybdenum cofactor) to form Mo-molybdopterin guanine dinucleotide (Mo-MGD) cofactor. The protein is Molybdenum cofactor guanylyltransferase of Escherichia coli O157:H7.